The following is a 162-amino-acid chain: Regulatory protein RecX (162 aa).

This sequence belongs to the RecX family.

The protein resides in the cytoplasm. In terms of biological role, modulates RecA activity. This is Regulatory protein RecX from Xanthomonas axonopodis pv. citri (strain 306).